Consider the following 339-residue polypeptide: 3,4-dihydroxy-2-butanone 4-phosphate synthase (339 aa).

The segment at 1–206 is DHBP synthase; the sequence is MKFVSVEQAI…YRLKHESLIK (206 aa). Residues 27–28, Asp-32, 139–143, and Glu-163 contribute to the D-ribulose 5-phosphate site; these read RE and RTGHT. Glu-28 contacts Mg(2+). Mg(2+) is bound at residue His-142. Residues 207–339 are GTP cyclohydrolase II-like; that stretch reads LEEKSQSVLA…GLNLKACNFN (133 aa).

The protein in the N-terminal section; belongs to the DHBP synthase family. In the C-terminal section; belongs to the GTP cyclohydrolase II family. Mg(2+) is required as a cofactor. Mn(2+) serves as cofactor.

It carries out the reaction D-ribulose 5-phosphate = (2S)-2-hydroxy-3-oxobutyl phosphate + formate + H(+). It participates in cofactor biosynthesis; riboflavin biosynthesis; 2-hydroxy-3-oxobutyl phosphate from D-ribulose 5-phosphate: step 1/1. Catalyzes the conversion of D-ribulose 5-phosphate to formate and 3,4-dihydroxy-2-butanone 4-phosphate. In Campylobacter jejuni subsp. jejuni serotype O:2 (strain ATCC 700819 / NCTC 11168), this protein is 3,4-dihydroxy-2-butanone 4-phosphate synthase (ribB).